Reading from the N-terminus, the 313-residue chain is Tyrosine--tRNA ligase (313 aa).

Position 32 (Y32) interacts with L-tyrosine. The short motif at 37 to 45 is the 'HIGH' region element; it reads PSGEIHLGH. L-tyrosine is bound by residues Y152, Q156, D159, and Q174. The 'KMSKS' region motif lies at 208–212; it reads KMSSS. An ATP-binding site is contributed by S211.

The protein belongs to the class-I aminoacyl-tRNA synthetase family. TyrS type 3 subfamily. Homodimer.

It localises to the cytoplasm. The catalysed reaction is tRNA(Tyr) + L-tyrosine + ATP = L-tyrosyl-tRNA(Tyr) + AMP + diphosphate + H(+). Its function is as follows. Catalyzes the attachment of tyrosine to tRNA(Tyr) in a two-step reaction: tyrosine is first activated by ATP to form Tyr-AMP and then transferred to the acceptor end of tRNA(Tyr). The sequence is that of Tyrosine--tRNA ligase from Methanospirillum hungatei JF-1 (strain ATCC 27890 / DSM 864 / NBRC 100397 / JF-1).